The sequence spans 131 residues: Small ribosomal subunit protein uS8 (131 aa).

The protein belongs to the universal ribosomal protein uS8 family. As to quaternary structure, part of the 30S ribosomal subunit. Contacts proteins S5 and S12.

Functionally, one of the primary rRNA binding proteins, it binds directly to 16S rRNA central domain where it helps coordinate assembly of the platform of the 30S subunit. This is Small ribosomal subunit protein uS8 from Hydrogenovibrio crunogenus (strain DSM 25203 / XCL-2) (Thiomicrospira crunogena).